Consider the following 418-residue polypeptide: Synaptotagmin-15 (418 aa).

Topologically, residues 1–4 are extracellular; the sequence is MAEQ. A helical; Signal-anchor for type III membrane protein membrane pass occupies residues 5–27; that stretch reads LAFLIGGIIGGLLLLIGVSCCLW. The Cytoplasmic segment spans residues 28 to 418; the sequence is RRFCATFTYE…WHALCRPTEP (391 aa). C2 domains lie at 144-261 and 275-396; these read CLGR…HRII and EFGD…EHWG.

This sequence belongs to the synaptotagmin family. In terms of assembly, homodimer. As to expression, isoform 1 and isoform 2 are expressed in heart, lung, skeletal muscle and testis; not detected in brain, liver and kidney. Isoform 1 is expressed in spleen.

It is found in the membrane. May be involved in the trafficking and exocytosis of secretory vesicles in non-neuronal tissues. The polypeptide is Synaptotagmin-15 (Syt15) (Mus musculus (Mouse)).